The chain runs to 336 residues: Glucokinase (336 aa).

13–18 (ADVGGT) is a binding site for ATP.

This sequence belongs to the bacterial glucokinase family.

It is found in the cytoplasm. The catalysed reaction is D-glucose + ATP = D-glucose 6-phosphate + ADP + H(+). The sequence is that of Glucokinase from Cupriavidus metallidurans (strain ATCC 43123 / DSM 2839 / NBRC 102507 / CH34) (Ralstonia metallidurans).